The primary structure comprises 897 residues: 3'-5' exonuclease DinG (897 aa).

The Exonuclease domain maps to 8–161; it reads VVDLETTGNQ…DEDAATTAKL (154 aa). In terms of domain architecture, Helicase ATP-binding spans 241 to 496; the sequence is SKAVDQLGLT…KAIDQLEKQR (256 aa). An ATP-binding site is contributed by 276-283; it reads ASLGSGKS. The DEAH box motif lies at 448–451; the sequence is DEAH. One can recognise a Helicase C-terminal domain in the interval 703–893; sequence NIDEYVASIV…QFGKLLRQIQ (191 aa).

It belongs to the helicase family. DinG subfamily. Type 2 sub-subfamily.

Its function is as follows. 3'-5' exonuclease. The protein is 3'-5' exonuclease DinG of Staphylococcus aureus (strain USA300).